Reading from the N-terminus, the 518-residue chain is 3-octaprenyl-4-hydroxybenzoate carboxy-lyase (518 aa).

N177 lines the Mn(2+) pocket. Prenylated FMN is bound by residues 180–182, 194–196, and 199–200; these read IYR, RWL, and RG. E243 lines the Mn(2+) pocket. D318 serves as the catalytic Proton donor.

It belongs to the UbiD family. In terms of assembly, homohexamer. It depends on prenylated FMN as a cofactor. Requires Mn(2+) as cofactor.

It localises to the cell membrane. It carries out the reaction a 4-hydroxy-3-(all-trans-polyprenyl)benzoate + H(+) = a 2-(all-trans-polyprenyl)phenol + CO2. Its pathway is cofactor biosynthesis; ubiquinone biosynthesis. In terms of biological role, catalyzes the decarboxylation of 3-octaprenyl-4-hydroxy benzoate to 2-octaprenylphenol, an intermediate step in ubiquinone biosynthesis. The polypeptide is 3-octaprenyl-4-hydroxybenzoate carboxy-lyase (Burkholderia orbicola (strain AU 1054)).